We begin with the raw amino-acid sequence, 402 residues long: Zinc finger protein 809 (402 aa).

One can recognise a KRAB domain in the interval 4–75 (VSFEDVAVDF…AEASSRSLPG (72 aa)). The disordered stretch occupies residues 118–139 (QEVSKGTTSRHRRAPVKSLCRK). The span at 125–139 (TSRHRRAPVKSLCRK) shows a compositional bias: basic residues. C2H2-type zinc fingers lie at residues 155-178 (YECK…RRTH), 184-206 (YECD…QKTH), 213-235 (YECS…ERTH), 241-263 (YECT…KKTH), 269-291 (FKCE…QKKH), 297-319 (YECT…RIAH), and 325-347 (YECK…QKRH).

It belongs to the krueppel C2H2-type zinc-finger protein family.

The protein resides in the nucleus. In terms of biological role, transcription factor specifically required to repress retrotransposons in embryonic stem cells. Recognizes and binds retroviral DNA sequences from a large subset of mammalian retroviruses and retroelements and repress their expression by recruiting a repressive complex containing TRIM28/KAP1. This chain is Zinc finger protein 809, found in Mus musculus (Mouse).